A 252-amino-acid polypeptide reads, in one-letter code: MMLHAQHMPGQPGTPSLVFLHGFSGDCHEWQPVGEQFHGCSRLYIDLPGHGGSAAIPVDGFADVIRLLRATLISYNILKFWLVGYSLGGRVAMMAACQGIPGLCGLVVEGGHPGLQNEQARAERRLSDGRWAERFRHEPLTEVFHDWYQQPVFASLTAQQRQALTALRSQNNGETLAAMLEATSLAVQPDLREALNALAFPFYYLCGERDSKFRALAQEVAATCHVIRNAGHNAHRENPAGVVDSLAQILRL.

This sequence belongs to the AB hydrolase superfamily. MenH family. Monomer.

It carries out the reaction 5-enolpyruvoyl-6-hydroxy-2-succinyl-cyclohex-3-ene-1-carboxylate = (1R,6R)-6-hydroxy-2-succinyl-cyclohexa-2,4-diene-1-carboxylate + pyruvate. The protein operates within quinol/quinone metabolism; 1,4-dihydroxy-2-naphthoate biosynthesis; 1,4-dihydroxy-2-naphthoate from chorismate: step 3/7. It participates in quinol/quinone metabolism; menaquinone biosynthesis. In terms of biological role, catalyzes a proton abstraction reaction that results in 2,5-elimination of pyruvate from 2-succinyl-5-enolpyruvyl-6-hydroxy-3-cyclohexene-1-carboxylate (SEPHCHC) and the formation of 2-succinyl-6-hydroxy-2,4-cyclohexadiene-1-carboxylate (SHCHC). The chain is 2-succinyl-6-hydroxy-2,4-cyclohexadiene-1-carboxylate synthase from Salmonella typhimurium (strain LT2 / SGSC1412 / ATCC 700720).